The primary structure comprises 468 residues: Ribulose bisphosphate carboxylase large chain (468 aa).

Lys5 is modified (N6,N6,N6-trimethyllysine). Substrate contacts are provided by Asn114 and Thr164. Lys166 (proton acceptor) is an active-site residue. Position 168 (Lys168) interacts with substrate. Mg(2+) is bound by residues Lys192, Asp194, and Glu195. Lys192 is modified (N6-carboxylysine). The active-site Proton acceptor is His285. Arg286, His318, and Ser370 together coordinate substrate.

Belongs to the RuBisCO large chain family. Type I subfamily. In terms of assembly, heterohexadecamer of 8 large chains and 8 small chains; disulfide-linked. The disulfide link is formed within the large subunit homodimers. Mg(2+) serves as cofactor. The disulfide bond which can form in the large chain dimeric partners within the hexadecamer appears to be associated with oxidative stress and protein turnover.

It is found in the plastid. It localises to the chloroplast. The enzyme catalyses 2 (2R)-3-phosphoglycerate + 2 H(+) = D-ribulose 1,5-bisphosphate + CO2 + H2O. It catalyses the reaction D-ribulose 1,5-bisphosphate + O2 = 2-phosphoglycolate + (2R)-3-phosphoglycerate + 2 H(+). RuBisCO catalyzes two reactions: the carboxylation of D-ribulose 1,5-bisphosphate, the primary event in carbon dioxide fixation, as well as the oxidative fragmentation of the pentose substrate in the photorespiration process. Both reactions occur simultaneously and in competition at the same active site. In Nolana spathulata (Chilean bell flower), this protein is Ribulose bisphosphate carboxylase large chain.